We begin with the raw amino-acid sequence, 246 residues long: Uridylate kinase (246 aa).

16 to 19 (KLGG) serves as a coordination point for ATP. UMP is bound at residue Gly57. Residues Gly58 and Arg62 each coordinate ATP. UMP-binding positions include Asp77 and 138-145 (MGMPYFST). Residues Tyr171 and Asp174 each contribute to the ATP site.

Belongs to the UMP kinase family. As to quaternary structure, homohexamer.

The protein localises to the cytoplasm. The enzyme catalyses UMP + ATP = UDP + ADP. It functions in the pathway pyrimidine metabolism; CTP biosynthesis via de novo pathway; UDP from UMP (UMPK route): step 1/1. With respect to regulation, inhibited by UTP. Catalyzes the reversible phosphorylation of UMP to UDP. This is Uridylate kinase from Corynebacterium jeikeium (strain K411).